Reading from the N-terminus, the 511-residue chain is MMKMRWLGAAIMLTLYASSSWAFSIDDVAKQAQSLAGKGYEAPKSNLPSVFRDMKYADYQQIQFNSDKAYWNNLKTPFKLEFYHQGMYFDTLVKINEVTATTVKRIKYSPDYFNFGNVQHDKDTVKDLGFAGFKVLYPINSKDKNDEIVSMLGASYFRVIGAGQVYGLSARGLAIDTALPSGEEFPRFREFWIERPKPTDKRLTVYALLDSPRATGAYRFVIIPGRDTVVDVQSKVYLRDKVGKLGVAPLTSMFLFGPNQPSPTTNYRPELHDSNGLSIHAGNGEWIWRPLNNPKHLAVSSYAMENPQGFGLLQRGREFSRFEDLDDRYDLRPSAWITPKGDWGKGKVELVEIPTNDETNDNIVAYWTPDQLPEPGKEMNFKYTLTFSRDEDKLHAPDNAWVLQTRRSTGDVKQSNLIRQPDGTIAFVVDFVGADMKKLPPDTPVAAQTSIGDNGEIVDSNVRYNPVTKGWRLMLRVKVKDAKKTTEMRAALVNADQTLSETWSYQLPANE.

A signal peptide spans 1-22 (MMKMRWLGAAIMLTLYASSSWA).

Belongs to the OpgD/OpgG family.

It localises to the periplasm. The protein operates within glycan metabolism; osmoregulated periplasmic glucan (OPG) biosynthesis. Functionally, involved in the biosynthesis of osmoregulated periplasmic glucans (OPGs). This is Glucans biosynthesis protein G from Salmonella paratyphi A (strain ATCC 9150 / SARB42).